An 89-amino-acid chain; its full sequence is UPF0147 protein YN1551_1489 (89 aa).

This sequence belongs to the UPF0147 family.

This Saccharolobus islandicus (strain Y.N.15.51 / Yellowstone #2) (Sulfolobus islandicus) protein is UPF0147 protein YN1551_1489.